The following is a 207-amino-acid chain: Holliday junction branch migration complex subunit RuvA (207 aa).

The domain I stretch occupies residues 1–64; the sequence is MIGLISGQVQ…EDAQLLYGFI (64 aa). The tract at residues 65–143 is domain II; the sequence is DRKERDVFRQ…NIEVDNSNLE (79 aa). Residues 144 to 152 form a flexible linker region; it reads FAIQPAPIS. The segment at 153–207 is domain III; that stretch reads AEDSIIAEVEGALMSLGYKEKEAQQAIKAAKSNGETFADTQSLLKATLQQFQSFK.

The protein belongs to the RuvA family. As to quaternary structure, homotetramer. Forms an RuvA(8)-RuvB(12)-Holliday junction (HJ) complex. HJ DNA is sandwiched between 2 RuvA tetramers; dsDNA enters through RuvA and exits via RuvB. An RuvB hexamer assembles on each DNA strand where it exits the tetramer. Each RuvB hexamer is contacted by two RuvA subunits (via domain III) on 2 adjacent RuvB subunits; this complex drives branch migration. In the full resolvosome a probable DNA-RuvA(4)-RuvB(12)-RuvC(2) complex forms which resolves the HJ.

It is found in the cytoplasm. The RuvA-RuvB-RuvC complex processes Holliday junction (HJ) DNA during genetic recombination and DNA repair, while the RuvA-RuvB complex plays an important role in the rescue of blocked DNA replication forks via replication fork reversal (RFR). RuvA specifically binds to HJ cruciform DNA, conferring on it an open structure. The RuvB hexamer acts as an ATP-dependent pump, pulling dsDNA into and through the RuvAB complex. HJ branch migration allows RuvC to scan DNA until it finds its consensus sequence, where it cleaves and resolves the cruciform DNA. This is Holliday junction branch migration complex subunit RuvA from Psychrobacter arcticus (strain DSM 17307 / VKM B-2377 / 273-4).